The sequence spans 175 residues: Probable DNA-directed RNA polymerase subunit delta (175 aa).

In terms of domain architecture, HTH HARE-type spans 14–81 (MALVEIAHEI…SDQTWGLRSW (68 aa)). The interval 110-175 (LDLDEFEEVD…YDDEEEDRKD (66 aa)) is disordered.

It belongs to the RpoE family. In terms of assembly, RNAP is composed of a core of 2 alpha, a beta and a beta' subunits. The core is associated with a delta subunit and one of several sigma factors.

Participates in both the initiation and recycling phases of transcription. In the presence of the delta subunit, RNAP displays an increased specificity of transcription, a decreased affinity for nucleic acids, and an increased efficiency of RNA synthesis because of enhanced recycling. In Bacillus velezensis (strain DSM 23117 / BGSC 10A6 / LMG 26770 / FZB42) (Bacillus amyloliquefaciens subsp. plantarum), this protein is Probable DNA-directed RNA polymerase subunit delta.